Reading from the N-terminus, the 555-residue chain is CTP synthase (555 aa).

The interval 1–267 is amidoligase domain; the sequence is MPKFVFVTGG…CKEVLEFLDL (267 aa). Ser-13 contributes to the CTP binding site. Ser-13 is a UTP binding site. Residues 14–19 and Asp-71 contribute to the ATP site; that span reads SIGKGI. 2 residues coordinate Mg(2+): Asp-71 and Glu-141. CTP contacts are provided by residues 148–150, 188–193, and Lys-224; these read DIE and KTKPTQ. UTP-binding positions include 188–193 and Lys-224; that span reads KTKPTQ. Positions 292 to 534 constitute a Glutamine amidotransferase type-1 domain; it reads KVAVVGKYVQ…IAAAQSRLPR (243 aa). Gly-354 is a binding site for L-glutamine. Cys-381 serves as the catalytic Nucleophile; for glutamine hydrolysis. L-glutamine is bound by residues 382–385, Glu-405, and Arg-462; that span reads LGMQ. Active-site residues include His-507 and Glu-509. The interval 532–555 is disordered; that stretch reads LPRSPQEALKQTQINSPNQSKNNP. The span at 540–555 shows a compositional bias: polar residues; sequence LKQTQINSPNQSKNNP.

The protein belongs to the CTP synthase family. Homotetramer.

The enzyme catalyses UTP + L-glutamine + ATP + H2O = CTP + L-glutamate + ADP + phosphate + 2 H(+). The catalysed reaction is L-glutamine + H2O = L-glutamate + NH4(+). It catalyses the reaction UTP + NH4(+) + ATP = CTP + ADP + phosphate + 2 H(+). Its pathway is pyrimidine metabolism; CTP biosynthesis via de novo pathway; CTP from UDP: step 2/2. Allosterically activated by GTP, when glutamine is the substrate; GTP has no effect on the reaction when ammonia is the substrate. The allosteric effector GTP functions by stabilizing the protein conformation that binds the tetrahedral intermediate(s) formed during glutamine hydrolysis. Inhibited by the product CTP, via allosteric rather than competitive inhibition. Functionally, catalyzes the ATP-dependent amination of UTP to CTP with either L-glutamine or ammonia as the source of nitrogen. Regulates intracellular CTP levels through interactions with the four ribonucleotide triphosphates. The sequence is that of CTP synthase from Prochlorococcus marinus (strain MIT 9211).